A 293-amino-acid chain; its full sequence is AKT-interacting protein homolog A (293 aa).

The span at 1 to 11 shows a compositional bias: polar residues; it reads MNPFWNMSSAS. The tract at residues 1–45 is disordered; it reads MNPFWNMSSASVRKRSENDEKISTGDQKISPPRSSSAKKQLPPIP. The segment covering 14–23 has biased composition (basic and acidic residues); that stretch reads KRSENDEKIS. Polar residues predominate over residues 24-38; sequence TGDQKISPPRSSSAK. The UBC core domain occupies 75–223; the sequence is YLEYSLLAEF…VVDSVKLCNS (149 aa). Basic and acidic residues predominate over residues 256–266; the sequence is AQKKKSEEQSK. Positions 256 to 293 are disordered; the sequence is AQKKKSEEQSKGLHVSGLSWVKPGSVLPFSKEENSLQT.

Belongs to the ubiquitin-conjugating enzyme family. FTS subfamily.

It localises to the cytoplasm. It is found in the cell membrane. May function to promote vesicle trafficking and/or fusion. May also regulate apoptosis. The polypeptide is AKT-interacting protein homolog A (aktip-a) (Xenopus laevis (African clawed frog)).